Here is a 232-residue protein sequence, read N- to C-terminus: Methylthioribulose-1-phosphate dehydratase (232 aa).

Cysteine 91 contacts substrate. The Zn(2+) site is built by histidine 109, histidine 111, and histidine 191.

It belongs to the aldolase class II family. MtnB subfamily. Requires Zn(2+) as cofactor.

The protein resides in the cytoplasm. The enzyme catalyses 5-(methylsulfanyl)-D-ribulose 1-phosphate = 5-methylsulfanyl-2,3-dioxopentyl phosphate + H2O. The protein operates within amino-acid biosynthesis; L-methionine biosynthesis via salvage pathway; L-methionine from S-methyl-5-thio-alpha-D-ribose 1-phosphate: step 2/6. Its function is as follows. Catalyzes the dehydration of methylthioribulose-1-phosphate (MTRu-1-P) into 2,3-diketo-5-methylthiopentyl-1-phosphate (DK-MTP-1-P). The sequence is that of Methylthioribulose-1-phosphate dehydratase from Schizosaccharomyces japonicus (strain yFS275 / FY16936) (Fission yeast).